Reading from the N-terminus, the 93-residue chain is uncharacterized protein (93 aa).

The helical transmembrane segment at 12 to 32 threads the bilayer; sequence VVGGLSFWTFSAGLIMIVNAL. A disordered region spans residues 47 to 66; the sequence is TANANGSDDDNENKNNSYRS.

It is found in the cell membrane. This is an uncharacterized protein from Mycoplasma genitalium (strain ATCC 33530 / DSM 19775 / NCTC 10195 / G37) (Mycoplasmoides genitalium).